The primary structure comprises 260 residues: 3-methyl-2-oxobutanoate hydroxymethyltransferase (260 aa).

Positions 44 and 83 each coordinate Mg(2+). 3-methyl-2-oxobutanoate is bound by residues 44–45 (DS), D83, and K113. E115 serves as a coordination point for Mg(2+). The Proton acceptor role is filled by E183.

It belongs to the PanB family. Homodecamer; pentamer of dimers. The cofactor is Mg(2+).

The protein resides in the cytoplasm. The enzyme catalyses 3-methyl-2-oxobutanoate + (6R)-5,10-methylene-5,6,7,8-tetrahydrofolate + H2O = 2-dehydropantoate + (6S)-5,6,7,8-tetrahydrofolate. The protein operates within cofactor biosynthesis; (R)-pantothenate biosynthesis; (R)-pantoate from 3-methyl-2-oxobutanoate: step 1/2. Functionally, catalyzes the reversible reaction in which hydroxymethyl group from 5,10-methylenetetrahydrofolate is transferred onto alpha-ketoisovalerate to form ketopantoate. The chain is 3-methyl-2-oxobutanoate hydroxymethyltransferase from Gloeobacter violaceus (strain ATCC 29082 / PCC 7421).